A 199-amino-acid chain; its full sequence is 7-methyl-GTP pyrophosphatase (199 aa).

Residue Asp76 is the Proton acceptor of the active site.

The protein belongs to the Maf family. YceF subfamily. It depends on a divalent metal cation as a cofactor.

The protein resides in the cytoplasm. It carries out the reaction N(7)-methyl-GTP + H2O = N(7)-methyl-GMP + diphosphate + H(+). In terms of biological role, nucleoside triphosphate pyrophosphatase that hydrolyzes 7-methyl-GTP (m(7)GTP). May have a dual role in cell division arrest and in preventing the incorporation of modified nucleotides into cellular nucleic acids. This Rhizobium etli (strain ATCC 51251 / DSM 11541 / JCM 21823 / NBRC 15573 / CFN 42) protein is 7-methyl-GTP pyrophosphatase.